The following is a 60-amino-acid chain: uncharacterized protein (60 aa).

This is an uncharacterized protein from Escherichia coli (Bacteriophage T4).